The following is a 161-amino-acid chain: Protein-export protein SecB (161 aa).

Belongs to the SecB family. In terms of assembly, homotetramer, a dimer of dimers. One homotetramer interacts with 1 SecA dimer.

It is found in the cytoplasm. Its function is as follows. One of the proteins required for the normal export of preproteins out of the cell cytoplasm. It is a molecular chaperone that binds to a subset of precursor proteins, maintaining them in a translocation-competent state. It also specifically binds to its receptor SecA. In Pseudomonas fluorescens (strain Pf0-1), this protein is Protein-export protein SecB.